We begin with the raw amino-acid sequence, 164 residues long: Galectin-3 (164 aa).

The 146-residue stretch at 9–154 (STVDLSEPLK…FSDVLGVTVL (146 aa)) folds into the Galectin domain. Residues H60, R64, N73, and E84 each coordinate a carbohydrate.

Homotetramer. Oligomerization is required for carbohydrate binding.

Its subcellular location is the secreted. It is found in the extracellular space. It localises to the extracellular matrix. The protein resides in the cell wall. Functionally, binds lactose. May play a role in fruiting body formation. The polypeptide is Galectin-3 (Cgl3) (Coprinopsis cinerea (strain Okayama-7 / 130 / ATCC MYA-4618 / FGSC 9003) (Inky cap fungus)).